Consider the following 432-residue polypeptide: Adenylosuccinate synthetase (432 aa).

GTP-binding positions include 13–19 (GDEGKGK) and 41–43 (GHT). D14 (proton acceptor) is an active-site residue. Residues D14 and G41 each coordinate Mg(2+). Residues 14–17 (DEGK), 39–42 (NAGH), T130, R144, Q225, T240, and R304 contribute to the IMP site. The active-site Proton donor is the H42. 300-306 (ATTGRRR) contacts substrate. GTP contacts are provided by residues R306, 332–334 (KLD), and 415–417 (STG).

Belongs to the adenylosuccinate synthetase family. In terms of assembly, homodimer. The cofactor is Mg(2+).

It is found in the cytoplasm. It carries out the reaction IMP + L-aspartate + GTP = N(6)-(1,2-dicarboxyethyl)-AMP + GDP + phosphate + 2 H(+). It participates in purine metabolism; AMP biosynthesis via de novo pathway; AMP from IMP: step 1/2. Plays an important role in the de novo pathway of purine nucleotide biosynthesis. Catalyzes the first committed step in the biosynthesis of AMP from IMP. In Shigella sonnei (strain Ss046), this protein is Adenylosuccinate synthetase.